Here is a 293-residue protein sequence, read N- to C-terminus: tRNA pseudouridine synthase B (293 aa).

The active-site Nucleophile is Asp39.

Belongs to the pseudouridine synthase TruB family. Type 1 subfamily.

It carries out the reaction uridine(55) in tRNA = pseudouridine(55) in tRNA. Responsible for synthesis of pseudouridine from uracil-55 in the psi GC loop of transfer RNAs. This is tRNA pseudouridine synthase B from Streptococcus thermophilus (strain ATCC BAA-250 / LMG 18311).